A 623-amino-acid chain; its full sequence is MDDQNKNLILATGLSFLVIMVWFFLFPPPEAVTEGEPTVATQQTAVAPSATPDAPTTAVPPDADLPETRRVAIDTPRLQGSISMLGGRLDDLSLKSYHETLDPQSQIVRLLSPVGQPNAYYALYGWTPAGALGYEDVPGANTTWTQVGSGALGVDQPVTLQWDNGKGLVFTRTISVDDHYMFSVAQTVENNSGQAVQLAPYGIVARHGKPLNLQNFFVLHEGVVGRADGKLTETKYDKVAELPQVAREGAQAEVIDAQQDGWIGFTDKYWMTTLIPQQGQPFTSVTKYVPGADIYQAETREQLVTVAPGATAEVSSRLFAGAKEWETIRAYQNEGATEPTEGAEPIPGFIDSIDWGWFFFLTKPIFTVLHWLNHMIGNMGLAIIALTFLLKALVLPLAYKSYVSMARMKELQPELEALRERAGDDKMLMQREMMRLYKEKQVNPAAGCLPILIQIPIFFSLYKVIFVTIELRHAPFFGWLKDLSAPDPSSIFNFFGLAPWAAPTPGTTMALIFIGALPILLGVSMWLQQKLNPAPGDKAQAMIFAWMPWVFMFMLGHFASGLVLYWIVNNLITFTQQYVIMRSHGHHPDIFGNIKASFSRKPAAQPAGKAANDGAAPAKKRKP.

A helical membrane pass occupies residues 8 to 28; that stretch reads LILATGLSFLVIMVWFFLFPP. Positions 33–64 are disordered; sequence TEGEPTVATQQTAVAPSATPDAPTTAVPPDAD. The segment covering 44–62 has biased composition (low complexity); the sequence is TAVAPSATPDAPTTAVPPD. 4 consecutive transmembrane segments (helical) span residues 379 to 399, 449 to 469, 507 to 527, and 543 to 563; these read MGLA…PLAY, LPIL…FVTI, TTMA…SMWL, and IFAW…SGLV. Residues 601 to 617 are compositionally biased toward low complexity; sequence KPAAQPAGKAANDGAAP. The segment at 601–623 is disordered; it reads KPAAQPAGKAANDGAAPAKKRKP.

The protein belongs to the OXA1/ALB3/YidC family. Type 1 subfamily. As to quaternary structure, interacts with the Sec translocase complex via SecD. Specifically interacts with transmembrane segments of nascent integral membrane proteins during membrane integration.

The protein resides in the cell inner membrane. In terms of biological role, required for the insertion and/or proper folding and/or complex formation of integral membrane proteins into the membrane. Involved in integration of membrane proteins that insert both dependently and independently of the Sec translocase complex, as well as at least some lipoproteins. Aids folding of multispanning membrane proteins. The polypeptide is Membrane protein insertase YidC (Cereibacter sphaeroides (strain KD131 / KCTC 12085) (Rhodobacter sphaeroides)).